Reading from the N-terminus, the 355-residue chain is Putative beta-lactamase HcpE (355 aa).

The first 22 residues, 1–22, serve as a signal peptide directing secretion; the sequence is MNIKILKILVGGLFFLSLNAHL. TPR repeat units lie at residues 27-60, 63-96, 98-131, 132-166, 202-240, 245-275, 276-311, and 312-344; these read DNSF…GVSE, TQLG…DDRE, CFGL…LKHP, ESCY…DMAK, GQAC…NNSG, LGSM…MGSA, VSCS…MGDE, and VGCF…GMKQ. 9 cysteine pairs are disulfide-bonded: cysteine 54–cysteine 62, cysteine 90–cysteine 98, cysteine 126–cysteine 134, cysteine 160–cysteine 168, cysteine 197–cysteine 205, cysteine 234–cysteine 242, cysteine 270–cysteine 278, cysteine 306–cysteine 314, and cysteine 338–cysteine 346.

The protein belongs to the hcp beta-lactamase family.

The protein resides in the secreted. It catalyses the reaction a beta-lactam + H2O = a substituted beta-amino acid. May hydrolyze 6-aminopenicillinic acid and 7-aminocephalosporanic acid (ACA) derivatives. The chain is Putative beta-lactamase HcpE (hcpE) from Helicobacter pylori (strain J99 / ATCC 700824) (Campylobacter pylori J99).